The sequence spans 1238 residues: Inner capsid protein VP2 (1238 aa).

A disordered region spans residues 1–35 (MSTSAKKTPESKTEDKIEPVIEQTSNDKPEPPPNK). The span at 7 to 30 (KTPESKTEDKIEPVIEQTSNDKPE) shows a compositional bias: basic and acidic residues.

The protein belongs to the turreted BTV-fold inner capsid family. Homodecamer; each decamer is made up of two conformers of VP2, called VP2A and VP2B. 12 homodecamers assemble to form an icosahedral capsid.

It localises to the virion. Its function is as follows. Inner capsid protein that self-assembles to form an icosahedral capsid with a T=2 symmetry, which consists of 120 copies of VP2, with channels at each of its five-fold vertices. This capsid constitutes the innermost concentric layer of the viral mature particle. This chain is Inner capsid protein VP2 (S2), found in Cryphonectria parasitica (Chestnut blight fungus).